Here is a 271-residue protein sequence, read N- to C-terminus: Mediator of RNA polymerase II transcription subunit 18 (271 aa).

Residues 89–119 (FGGNPSSSGDPDVSMSGLEEKPSSSSSSYSY) are disordered.

The protein belongs to the Mediator complex subunit 18 family. As to quaternary structure, component of the Mediator complex.

The protein resides in the nucleus. Functionally, component of the Mediator complex, a coactivator involved in the regulated transcription of nearly all RNA polymerase II-dependent genes. Mediator functions as a bridge to convey information from gene-specific regulatory proteins to the basal RNA polymerase II transcription machinery. Mediator is recruited to promoters by direct interactions with regulatory proteins and serves as a scaffold for the assembly of a functional preinitiation complex with RNA polymerase II and the general transcription factors. The protein is Mediator of RNA polymerase II transcription subunit 18 (srb5) of Aspergillus niger (strain ATCC MYA-4892 / CBS 513.88 / FGSC A1513).